We begin with the raw amino-acid sequence, 858 residues long: MAGYTPMIQQYLKIKAEHQDAFLFFRLGDFYEMFFEDAKKASQELEITLTSRDGGAAEKIPMCGVPYHSASAYIEQLIKKGYKVAICEQTEDPKAAKGVVKREVVQLITPGTVMDGKGIHESENNFIASVSACSNGYGLALSDLTTGENLAVLIERLEDVISEIYSVGAREIVVSGSLDADTVAQLRERCGATISIEDGETDEHVTIIEHLNNEDITKTFLRLYTYLKRTQKRSLDHLQPVQVYELEEAMKIDLYSKRNLELTETIRSKNKKGSLLWLLDETKTAMGGRLLKQWIDRPLIRVNQIEERQEMVETLMSHFFEREDLRERLKEVYDLERLAGRVAFGNVNARDLIQLKESLKQVPGIKQLVASLAHDKAKERAKRIDPCGDVLELLEEALYENPPLSVKEGNLIKDGYNQKLDEYRDASRNGKDWIARLEQQEREYTGIRSLKVGFNKVFGYYIEVTKANLHLLEEGRYERKQTLTNAERYITPELKEKEALILEAENNICELEYELFTELREKVKQYIPRLQQLAKQMSELDALQCFATISENRHYTKPEFSKDEVEVIEGRHPVVEKVMDSQEYVPNNCMMGDNRQMLLITGPNMSGKSTYMRQIALISIMAQIGCFVPAKKAVLPIFDQIFTRIGAADDLISGQSTFMVEMLEAKNAIVNATKNSLILFDEIGRGTSTYDGMALAQAIIEYVHDHIGAKTLFSTHYHELTVLEDKLPQLKNVHVRAEEYNGTVVFLHQIKEGAADKSYGIHVAQLAELPGDLIARAQDILKELEHSGNKPEVPVQKPQVKEEPAQLSFFDEAEKPAETPKLSKKEKQVIDAFKSLNILDMTPLEAMNEMYKLQKKLH.

Position 602–609 (602–609 (GPNMSGKS)) interacts with ATP.

The protein belongs to the DNA mismatch repair MutS family.

Its function is as follows. This protein is involved in the repair of mismatches in DNA. It is possible that it carries out the mismatch recognition step. This protein has a weak ATPase activity. Overexpression of mutSL partially suppresses the high spontaneous mutation frequency of a ytkD/mutM/mutY triple disruption which lacks the system required to prevent damage by oxidized guanine (8-oxo-dGTP). This suggests that MutSL also functions to repair mismatches due to oxidative stress in both growing and stationary phase cells. The polypeptide is DNA mismatch repair protein MutS (Bacillus subtilis (strain 168)).